Reading from the N-terminus, the 297-residue chain is MAKRIFLFILTNLLVITTIGIVLTIITSVTGVGSYIQNGRIDLMALLVFSLVVGFVGSFISLGMSRWMAKTMMGVRVLNPKKQSLSYEEQQLVDRVHRLSRAAGMTKMPEVGIYHSPEVNAFATGPSKRRSLVAVSSGLLQQMDDAAVEGVLAHEVAHITNGDMVTMTLLQGIVNTFVVFLSRIAAWVASRFVKEDLAPVVHFIAMIVFQIIFSILGSLVVFAYSRHREFHADRGGADLAGKDKMIHALRTLKSYTGHVNEEDQTAVQTLKINGKKHSSLFSTHPDLDERIRRLEAK.

2 helical membrane passes run 5–25 and 43–63; these read IFLF…VLTI and LMAL…ISLG. Residue H154 coordinates Zn(2+). E155 is a catalytic residue. H158 contacts Zn(2+). Transmembrane regions (helical) follow at residues 169–189 and 203–223; these read LLQG…AWVA and FIAM…VVFA. E229 is a binding site for Zn(2+).

This sequence belongs to the peptidase M48B family. Zn(2+) serves as cofactor.

It localises to the cell membrane. The protein is Protease HtpX homolog of Bacillus velezensis (strain DSM 23117 / BGSC 10A6 / LMG 26770 / FZB42) (Bacillus amyloliquefaciens subsp. plantarum).